The chain runs to 132 residues: Ribonuclease VapC15 (132 aa).

The PINc domain occupies 1 to 121 (MIVDTSVWIA…HRDRDYEAIR (121 aa)). Residue Asp-96 participates in Mg(2+) binding. Mn(2+)-binding residues include Asp-96, Asp-114, and Asp-116.

The protein belongs to the PINc/VapC protein family. As to quaternary structure, crystallizes as a VapB15-VapC15(2) heterotrimer and as a VapB15(2)-VapC15(2) heterotetramer; each toxin pair forms a homodimer which creates a channel in which the antitoxin binds. Mg(2+) is required as a cofactor. Mn(2+) serves as cofactor.

With respect to regulation, RNase activity inhibited by EDTA. Toxic component of a type II toxin-antitoxin (TA) system. Degrades total E.coli RNA, which is partially inhibited by cognate antitoxin VapB15. Upon expression in M.smegmatis inhibits colony formation, which is neutralized by coexpression with VapB15. The polypeptide is Ribonuclease VapC15 (Mycobacterium tuberculosis (strain ATCC 25618 / H37Rv)).